Reading from the N-terminus, the 484-residue chain is Chromosomal replication initiator protein DnaA (484 aa).

Positions 1-74 (MEKSKNIWSL…ILTKNGYNNV (74 aa)) are domain I, interacts with DnaA modulators. The tract at residues 74–139 (VTIVFTNQPP…EEEPTNFKNP (66 aa)) is domain II. Residues 140–356 (FLKKRYTFEN…AAVTKLKAYI (217 aa)) are domain III, AAA+ region. Residues Gly184, Gly186, Lys187, and Thr188 each contribute to the ATP site. The segment at 357-484 (DLDNIEIDID…TELMNKIKKN (128 aa)) is domain IV, binds dsDNA.

The protein belongs to the DnaA family. Oligomerizes as a right-handed, spiral filament on DNA at oriC.

The protein resides in the cytoplasm. Functionally, plays an essential role in the initiation and regulation of chromosomal replication. ATP-DnaA binds to the origin of replication (oriC) to initiate formation of the DNA replication initiation complex once per cell cycle. Binds the DnaA box (a 9 base pair repeat at the origin) and separates the double-stranded (ds)DNA. Forms a right-handed helical filament on oriC DNA; dsDNA binds to the exterior of the filament while single-stranded (ss)DNA is stabiized in the filament's interior. The ATP-DnaA-oriC complex binds and stabilizes one strand of the AT-rich DNA unwinding element (DUE), permitting loading of DNA polymerase. After initiation quickly degrades to an ADP-DnaA complex that is not apt for DNA replication. Binds acidic phospholipids. This chain is Chromosomal replication initiator protein DnaA, found in Borrelia garinii subsp. bavariensis (strain ATCC BAA-2496 / DSM 23469 / PBi) (Borreliella bavariensis).